Reading from the N-terminus, the 331-residue chain is DNA-directed RNA polymerase subunit alpha (331 aa).

The alpha N-terminal domain (alpha-NTD) stretch occupies residues 1–226 (MLIAQRPTLT…ELFGLARELN (226 aa)). Residues 243 to 331 (LSSELSMPIE…SYDEDETTTN (89 aa)) are alpha C-terminal domain (alpha-CTD).

This sequence belongs to the RNA polymerase alpha chain family. In terms of assembly, homodimer. The RNAP catalytic core consists of 2 alpha, 1 beta, 1 beta' and 1 omega subunit. When a sigma factor is associated with the core the holoenzyme is formed, which can initiate transcription.

The catalysed reaction is RNA(n) + a ribonucleoside 5'-triphosphate = RNA(n+1) + diphosphate. Its function is as follows. DNA-dependent RNA polymerase catalyzes the transcription of DNA into RNA using the four ribonucleoside triphosphates as substrates. The protein is DNA-directed RNA polymerase subunit alpha of Clavibacter sepedonicus (Clavibacter michiganensis subsp. sepedonicus).